Here is a 182-residue protein sequence, read N- to C-terminus: N-alpha-acetyltransferase daf-31 (182 aa).

Residues 1–152 form the N-acetyltransferase domain; it reads MNIRCARVDD…DAYAMRRDLA (152 aa). The interval 162-182 is disordered; sequence PADREAYTTAKTTDDKKKNRS.

Belongs to the acetyltransferase family. ARD1 subfamily. In terms of assembly, component of the N-terminal acetyltransferase A (NatA) complex. In terms of tissue distribution, expressed in head and tail hypodermal cells, hypodermal seam cells, pharynx, intestine and head and tail neurons.

It carries out the reaction N-terminal glycyl-[protein] + acetyl-CoA = N-terminal N(alpha)-acetylglycyl-[protein] + CoA + H(+). The catalysed reaction is N-terminal L-alanyl-[protein] + acetyl-CoA = N-terminal N(alpha)-acetyl-L-alanyl-[protein] + CoA + H(+). The enzyme catalyses N-terminal L-seryl-[protein] + acetyl-CoA = N-terminal N(alpha)-acetyl-L-seryl-[protein] + CoA + H(+). It catalyses the reaction N-terminal L-valyl-[protein] + acetyl-CoA = N-terminal N(alpha)-acetyl-L-valyl-[protein] + CoA + H(+). It carries out the reaction N-terminal L-cysteinyl-[protein] + acetyl-CoA = N-terminal N(alpha)-acetyl-L-cysteinyl-[protein] + CoA + H(+). The catalysed reaction is N-terminal L-threonyl-[protein] + acetyl-CoA = N-terminal N(alpha)-acetyl-L-threonyl-[protein] + CoA + H(+). Catalytic subunit of the N-terminal acetyltransferase A (NatA) complex which displays alpha (N-terminal) acetyltransferase activity. Plays a role in regulating larval development, metabolism and longevity. Functions downstream or alongside daf-3, daf-12 and daf-16 in the dauer formation pathway. Functions upstream of daf-15 to enable animal development. The chain is N-alpha-acetyltransferase daf-31 from Caenorhabditis elegans.